The sequence spans 265 residues: Orotidine 5'-phosphate decarboxylase (265 aa).

Substrate is bound by residues Asp-38, 60–62 (KTH), 92–101 (DRKFADIGKT), Tyr-218, and Arg-236. Lys-94 functions as the Proton donor in the catalytic mechanism.

Belongs to the OMP decarboxylase family.

It catalyses the reaction orotidine 5'-phosphate + H(+) = UMP + CO2. It functions in the pathway pyrimidine metabolism; UMP biosynthesis via de novo pathway; UMP from orotate: step 2/2. This is Orotidine 5'-phosphate decarboxylase (URA3) from Cyberlindnera fabianii (Yeast).